The sequence spans 301 residues: Ribosomal protein L11 methyltransferase (301 aa).

Residues T152, G173, D195, and N236 each coordinate S-adenosyl-L-methionine.

It belongs to the methyltransferase superfamily. PrmA family.

The protein resides in the cytoplasm. It catalyses the reaction L-lysyl-[protein] + 3 S-adenosyl-L-methionine = N(6),N(6),N(6)-trimethyl-L-lysyl-[protein] + 3 S-adenosyl-L-homocysteine + 3 H(+). In terms of biological role, methylates ribosomal protein L11. This is Ribosomal protein L11 methyltransferase from Dictyoglomus thermophilum (strain ATCC 35947 / DSM 3960 / H-6-12).